A 189-amino-acid chain; its full sequence is ATP-dependent protease subunit HslV (189 aa).

Threonine 12 is a catalytic residue. Na(+) is bound by residues serine 172, cysteine 175, and threonine 178.

The protein belongs to the peptidase T1B family. HslV subfamily. As to quaternary structure, a double ring-shaped homohexamer of HslV is capped on each side by a ring-shaped HslU homohexamer. The assembly of the HslU/HslV complex is dependent on binding of ATP.

Its subcellular location is the cytoplasm. The enzyme catalyses ATP-dependent cleavage of peptide bonds with broad specificity.. Allosterically activated by HslU binding. Functionally, protease subunit of a proteasome-like degradation complex believed to be a general protein degrading machinery. The polypeptide is ATP-dependent protease subunit HslV (Ehrlichia canis (strain Jake)).